A 329-amino-acid polypeptide reads, in one-letter code: Putative GTPase Obg (329 aa).

One can recognise an Obg domain in the interval 1-159 (MQFIDQARIM…WPLQLELKLL (159 aa)). The OBG-type G domain occupies 160–328 (AEVGIIGLPN…LKTQIWQQLG (169 aa)). GTP contacts are provided by residues 166–173 (GLPNAGKS), 191–195 (FTTLI), 213–216 (DIPG), 280–283 (SKIE), and 309–311 (SSA). Serine 173 and threonine 193 together coordinate Mg(2+).

The protein belongs to the TRAFAC class OBG-HflX-like GTPase superfamily. OBG GTPase family. Monomer. It depends on Mg(2+) as a cofactor.

It is found in the plastid. The protein localises to the organellar chromatophore. An essential GTPase which binds GTP, GDP and possibly (p)ppGpp with moderate affinity, with high nucleotide exchange rates and a fairly low GTP hydrolysis rate. This Paulinella chromatophora protein is Putative GTPase Obg.